The sequence spans 266 residues: Hydroxyethylthiazole kinase (266 aa).

Residue Met45 coordinates substrate. ATP is bound by residues Arg120 and Thr165. Ala192 contributes to the substrate binding site.

This sequence belongs to the Thz kinase family. The cofactor is Mg(2+).

It carries out the reaction 5-(2-hydroxyethyl)-4-methylthiazole + ATP = 4-methyl-5-(2-phosphooxyethyl)-thiazole + ADP + H(+). It participates in cofactor biosynthesis; thiamine diphosphate biosynthesis; 4-methyl-5-(2-phosphoethyl)-thiazole from 5-(2-hydroxyethyl)-4-methylthiazole: step 1/1. Catalyzes the phosphorylation of the hydroxyl group of 4-methyl-5-beta-hydroxyethylthiazole (THZ). The sequence is that of Hydroxyethylthiazole kinase from Psychrobacter sp. (strain PRwf-1).